The chain runs to 377 residues: TraB domain-containing protein (377 aa).

At Met1 the chain carries N-acetylmethionine. The tract at residues Met1 to Pro34 is disordered. At Thr65 the chain carries Phosphothreonine.

The sequence is that of TraB domain-containing protein (TRABD) from Bos taurus (Bovine).